We begin with the raw amino-acid sequence, 302 residues long: Cell division protein FtsQ (302 aa).

Residues 1–41 form a disordered region; the sequence is MPAVVRGGPPKPRRPRAEAPASPSKGKPAPRKAQPAAKLHA. Residues 1–50 are Cytoplasmic-facing; that stretch reads MPAVVRGGPPKPRRPRAEAPASPSKGKPAPRKAQPAAKLHAARGVGLSPT. Over residues 18–38 the composition is skewed to low complexity; that stretch reads EAPASPSKGKPAPRKAQPAAK. The helical transmembrane segment at 51-71 threads the bilayer; it reads VALSVAGAALGLGLVVMLATG. The Periplasmic portion of the chain corresponds to 72–302; it reads HRAERLGASM…LPGQPAADGA (231 aa). A POTRA domain is found at 94–162; that stretch reads FRLKTVHIRG…DTVLIAVEER (69 aa).

This sequence belongs to the FtsQ/DivIB family. FtsQ subfamily.

It is found in the cell inner membrane. Essential cell division protein. This Caulobacter vibrioides (strain ATCC 19089 / CIP 103742 / CB 15) (Caulobacter crescentus) protein is Cell division protein FtsQ.